A 403-amino-acid chain; its full sequence is S-arrestin (403 aa).

The interval 11-19 (HVIFKKVSR) is interaction with RHO. Threonine 231 carries the post-translational modification Phosphothreonine. Residues 381-403 (RQNLKDTGENTEGKKDEDAGQDE) form a disordered region.

The protein belongs to the arrestin family. In terms of assembly, monomer. Homodimer. Homotetramer. Interacts with RHO (via the phosphorylated C-terminus). In terms of tissue distribution, detected in retina (at protein level).

It is found in the cell projection. Its subcellular location is the cilium. It localises to the photoreceptor outer segment. The protein localises to the membrane. In terms of biological role, binds to photoactivated, phosphorylated RHO and terminates RHO signaling via G-proteins by competing with G-proteins for the same binding site on RHO. May play a role in preventing light-dependent degeneration of retinal photoreceptor cells. This is S-arrestin (Sag) from Mus musculus (Mouse).